The chain runs to 145 residues: Immunity protein CdiI (145 aa).

In terms of assembly, interacts with cognate toxin fragment CdiA-CT.

Functionally, immunity protein component of a toxin-immunity protein module, which functions as a cellular contact-dependent growth inhibition (CDI) system. CDI modules allow bacteria to communicate with and inhibit the growth of closely related neighboring bacteria in a contact-dependent fashion. Protects cells against the 16S rRNase activity of CdiA-CT, its cognate toxin protein, but not against the toxic effects of a similar rRNase, non-cognate CdiA-CT from E.chrysanthemi strain EC16. The sequence is that of Immunity protein CdiI from Enterobacter cloacae subsp. cloacae (strain ATCC 13047 / DSM 30054 / NBRC 13535 / NCTC 10005 / WDCM 00083 / NCDC 279-56).